The chain runs to 155 residues: Cyanate hydratase (155 aa).

Active-site residues include Arg95, Glu98, and Ser121.

The protein belongs to the cyanase family.

It catalyses the reaction cyanate + hydrogencarbonate + 3 H(+) = NH4(+) + 2 CO2. In terms of biological role, catalyzes the reaction of cyanate with bicarbonate to produce ammonia and carbon dioxide. In Pseudomonas savastanoi pv. phaseolicola (strain 1448A / Race 6) (Pseudomonas syringae pv. phaseolicola (strain 1448A / Race 6)), this protein is Cyanate hydratase.